Consider the following 553-residue polypeptide: Copine-9 (553 aa).

2 consecutive C2 domains span residues 1–125 (MSLG…ERTL) and 132–255 (KCGT…FTVY). N95 carries an N-linked (GlcNAc...) asparagine glycan. Residues D163, D169, D225, D227, and D233 each contribute to the Ca(2+) site. Residues 299 to 500 (NFTVAIDFTA…VQFVPFRDYV (202 aa)) enclose the VWFA domain. Positions 531–553 (TRDIQPRPPPPANPSPIPAPEQP) are disordered. Pro residues predominate over residues 536 to 553 (PRPPPPANPSPIPAPEQP).

The protein belongs to the copine family. It depends on Ca(2+) as a cofactor. In terms of tissue distribution, expressed in melanocytes.

Its function is as follows. Probable calcium-dependent phospholipid-binding protein that may play a role in calcium-mediated intracellular processes. Plays a role in dendrite formation by melanocytes. The protein is Copine-9 of Homo sapiens (Human).